Consider the following 285-residue polypeptide: Vesicle-associated membrane protein 725 (285 aa).

The Cytoplasmic segment spans residues 1–261 (MDRSVVPISL…MWFENMKIKL (261 aa)). The Longin domain occupies 75–179 (FVARGTVILV…SLNREFGSKL (105 aa)). The region spanning 195–255 (KLAKVKAQVT…TKIRRKMWFE (61 aa)) is the v-SNARE coiled-coil homology domain. A helical; Anchor for type IV membrane protein membrane pass occupies residues 262–282 (IVLGIIITLILIIILSVCGGF). Over 283 to 285 (KCT) the chain is Vesicular.

This sequence belongs to the synaptobrevin family. As to expression, expressed in flowers, leaves, stems and roots.

It is found in the cell membrane. It localises to the early endosome membrane. Its function is as follows. Involved in the targeting and/or fusion of transport vesicles to their target membrane. This is Vesicle-associated membrane protein 725 from Arabidopsis thaliana (Mouse-ear cress).